We begin with the raw amino-acid sequence, 253 residues long: Glucosamine-6-phosphate deaminase (253 aa).

Asp-67 functions as the Proton acceptor; for enolization step in the catalytic mechanism. Asn-136 (for ring-opening step) is an active-site residue. His-138 functions as the Proton acceptor; for ring-opening step in the catalytic mechanism. Glu-143 serves as the catalytic For ring-opening step.

It belongs to the glucosamine/galactosamine-6-phosphate isomerase family. NagB subfamily.

The catalysed reaction is alpha-D-glucosamine 6-phosphate + H2O = beta-D-fructose 6-phosphate + NH4(+). Its pathway is amino-sugar metabolism; N-acetylneuraminate degradation; D-fructose 6-phosphate from N-acetylneuraminate: step 5/5. Its function is as follows. Catalyzes the reversible isomerization-deamination of glucosamine 6-phosphate (GlcN6P) to form fructose 6-phosphate (Fru6P) and ammonium ion. The polypeptide is Glucosamine-6-phosphate deaminase (Thermoanaerobacter sp. (strain X514)).